The sequence spans 651 residues: DNA mismatch repair protein MutL (651 aa).

The tract at residues 336–398 (RLDMTEPETG…ANSGYQPENP (63 aa)) is disordered. The segment covering 385-394 (ARESANSGYQ) has biased composition (polar residues).

Belongs to the DNA mismatch repair MutL/HexB family.

Functionally, this protein is involved in the repair of mismatches in DNA. It is required for dam-dependent methyl-directed DNA mismatch repair. May act as a 'molecular matchmaker', a protein that promotes the formation of a stable complex between two or more DNA-binding proteins in an ATP-dependent manner without itself being part of a final effector complex. The sequence is that of DNA mismatch repair protein MutL from Pectobacterium atrosepticum (strain SCRI 1043 / ATCC BAA-672) (Erwinia carotovora subsp. atroseptica).